Consider the following 175-residue polypeptide: ATP synthase subunit b (175 aa).

A helical transmembrane segment spans residues 24–44; it reads LVLWQIAATVILIIVVRIFLW.

Belongs to the ATPase B chain family. As to quaternary structure, F-type ATPases have 2 components, F(1) - the catalytic core - and F(0) - the membrane proton channel. F(1) has five subunits: alpha(3), beta(3), gamma(1), delta(1), epsilon(1). F(0) has three main subunits: a(1), b(2) and c(10-14). The alpha and beta chains form an alternating ring which encloses part of the gamma chain. F(1) is attached to F(0) by a central stalk formed by the gamma and epsilon chains, while a peripheral stalk is formed by the delta and b chains.

It is found in the cell membrane. Its function is as follows. F(1)F(0) ATP synthase produces ATP from ADP in the presence of a proton or sodium gradient. F-type ATPases consist of two structural domains, F(1) containing the extramembraneous catalytic core and F(0) containing the membrane proton channel, linked together by a central stalk and a peripheral stalk. During catalysis, ATP synthesis in the catalytic domain of F(1) is coupled via a rotary mechanism of the central stalk subunits to proton translocation. Functionally, component of the F(0) channel, it forms part of the peripheral stalk, linking F(1) to F(0). This is ATP synthase subunit b from Acholeplasma laidlawii (strain PG-8A).